The chain runs to 225 residues: NAD(P)H-quinone oxidoreductase subunit K, chloroplastic (225 aa).

4 residues coordinate [4Fe-4S] cluster: cysteine 43, cysteine 44, cysteine 108, and cysteine 139.

This sequence belongs to the complex I 20 kDa subunit family. NDH is composed of at least 16 different subunits, 5 of which are encoded in the nucleus. [4Fe-4S] cluster serves as cofactor.

Its subcellular location is the plastid. It localises to the chloroplast thylakoid membrane. The catalysed reaction is a plastoquinone + NADH + (n+1) H(+)(in) = a plastoquinol + NAD(+) + n H(+)(out). It catalyses the reaction a plastoquinone + NADPH + (n+1) H(+)(in) = a plastoquinol + NADP(+) + n H(+)(out). Its function is as follows. NDH shuttles electrons from NAD(P)H:plastoquinone, via FMN and iron-sulfur (Fe-S) centers, to quinones in the photosynthetic chain and possibly in a chloroplast respiratory chain. The immediate electron acceptor for the enzyme in this species is believed to be plastoquinone. Couples the redox reaction to proton translocation, and thus conserves the redox energy in a proton gradient. The polypeptide is NAD(P)H-quinone oxidoreductase subunit K, chloroplastic (Atropa belladonna (Belladonna)).